The chain runs to 440 residues: Beta-1,3-galactosyl-O-glycosyl-glycoprotein beta-1,6-N-acetylglucosaminyltransferase (440 aa).

The Cytoplasmic portion of the chain corresponds to 1-9 (MKMAGWKKK). Residues 10–30 (LCPGHHLWALGCYMLLAVVSL) form a helical; Signal-anchor for type II membrane protein membrane-spanning segment. Topologically, residues 31-440 (RLSLRFKCDV…RHKAIYGTEL (410 aa)) are lumenal. N-linked (GlcNAc...) asparagine; by host glycans are attached at residues Asn72 and Asn108. 4 cysteine pairs are disulfide-bonded: Cys73/Cys230, Cys164/Cys384, Cys185/Cys212, and Cys393/Cys425.

This sequence belongs to the glycosyltransferase 14 family.

It localises to the host Golgi apparatus membrane. The enzyme catalyses a 3-O-[beta-D-galactosyl-(1-&gt;3)-N-acetyl-alpha-D-galactosaminyl]-L-seryl-[protein] + UDP-N-acetyl-alpha-D-glucosamine = 3-O-{beta-D-galactosyl-(1-&gt;3)-[N-acetyl-beta-D-glucosaminyl-(1-&gt;6)]-N-acetyl-alpha-D-galactosaminyl}-L-seryl-[protein] + UDP + H(+). It carries out the reaction a 3-O-[beta-D-galactosyl-(1-&gt;3)-N-acetyl-alpha-D-galactosaminyl]-L-threonyl-[protein] + UDP-N-acetyl-alpha-D-glucosamine = a 3-O-{beta-D-galactosyl-(1-&gt;3)-[N-acetyl-beta-D-glucosaminyl-(1-&gt;6)]-N-acetyl-alpha-D-galactosaminyl}-L-threonyl-[protein] + UDP + H(+). It catalyses the reaction a beta-D-Gal-(1-&gt;4)-beta-D-GlcNAc-(1-&gt;3)-beta-D-Gal-(1-&gt;4)-beta-D-GlcNAc derivative + UDP-N-acetyl-alpha-D-glucosamine = a beta-D-Gal-(1-&gt;4)-beta-D-GlcNAc-(1-&gt;3)-[beta-D-GlcNAc-(1-&gt;6)]-beta-D-Gal-(1-&gt;4)-N-acetyl-beta-D-glucosaminyl derivative + UDP + H(+). The catalysed reaction is 3-O-[N-acetyl-beta-D-glucosaminyl-(1-&gt;3)-N-acetyl-alpha-D-galactosaminyl]-L-seryl-[protein] + UDP-N-acetyl-alpha-D-glucosamine = 3-O-[N-acetyl-beta-D-glucosaminyl-(1-&gt;3)-[N-acetyl-beta-D-glucosaminyl-(1-&gt;6)]-N-acetyl-alpha-D-galactosaminyl]-L-seryl-[protein] + UDP + H(+). The enzyme catalyses a 3-O-[N-acetyl-beta-D-glucosaminyl-(1-&gt;3)-N-acetyl-alpha-D-galactosaminyl]-L-threonyl-[protein] + UDP-N-acetyl-alpha-D-glucosamine = 3-O-[N-acetyl-beta-D-glucosaminyl-(1-&gt;3)-[N-acetyl-beta-D-glucosaminyl-(1-&gt;6)]-N-acetyl-alpha-D-galactosaminyl]-L-threonyl-[protein] + UDP + H(+). It participates in protein modification; protein glycosylation. Its function is as follows. Non-essential glycosyltransferase that can synthesize all known mucin beta 6 N-acetylglucosaminides. Mediates core 2 and core 4 O-glycan branching, 2 important steps in mucin-type biosynthesis. Has also I-branching enzyme activity by converting linear into branched poly-N-acetyllactosaminoglycans. Contributes to the post-translational modifications of structural proteins. The chain is Beta-1,3-galactosyl-O-glycosyl-glycoprotein beta-1,6-N-acetylglucosaminyltransferase (Bo17) from Bovine herpesvirus 4 (strain LVR140) (BoHV-4).